We begin with the raw amino-acid sequence, 44 residues long: Cytochrome b559 subunit beta (44 aa).

A helical transmembrane segment spans residues 19–35; that stretch reads WVSIHALAVPTIFFLGS. H23 contributes to the heme binding site.

It belongs to the PsbE/PsbF family. In terms of assembly, heterodimer of an alpha subunit and a beta subunit. PSII is composed of 1 copy each of membrane proteins PsbA, PsbB, PsbC, PsbD, PsbE, PsbF, PsbH, PsbI, PsbJ, PsbK, PsbL, PsbM, PsbT, PsbX, PsbY, PsbZ, Psb30/Ycf12, at least 3 peripheral proteins of the oxygen-evolving complex and a large number of cofactors. It forms dimeric complexes. It depends on heme b as a cofactor.

The protein resides in the plastid. It localises to the chloroplast thylakoid membrane. This b-type cytochrome is tightly associated with the reaction center of photosystem II (PSII). PSII is a light-driven water:plastoquinone oxidoreductase that uses light energy to abstract electrons from H(2)O, generating O(2) and a proton gradient subsequently used for ATP formation. It consists of a core antenna complex that captures photons, and an electron transfer chain that converts photonic excitation into a charge separation. This is Cytochrome b559 subunit beta from Chlamydomonas moewusii (Chlamydomonas eugametos).